A 215-amino-acid chain; its full sequence is Rho-related GTP-binding protein RhoF (215 aa).

M1 is subject to N-acetylmethionine. Residue G30 to T37 participates in GTP binding. Positions Y52–Y60 match the Effector region motif. GTP is bound by residues D77–Q81 and C135–D138. Residue C212 is modified to Cysteine methyl ester. C212 is lipidated: S-geranylgeranyl cysteine. Residues L213–L215 constitute a propeptide, removed in mature form.

Belongs to the small GTPase superfamily. Rho family.

It localises to the cell membrane. The protein localises to the cytoplasm. It is found in the cytoskeleton. Functionally, plasma membrane-associated small GTPase which cycles between an active GTP-bound and an inactive GDP-bound state. Causes the formation of thin, actin-rich surface projections called filopodia. Functions cooperatively with CDC42 and Rac to generate additional structures, increasing the diversity of actin-based morphology. The sequence is that of Rho-related GTP-binding protein RhoF (RHOF) from Bos taurus (Bovine).